Here is a 132-residue protein sequence, read N- to C-terminus: Histone H2A (132 aa).

Positions 1 to 10 are enriched in gly residues; the sequence is MTGGKSGGKA. A disordered region spans residues 1 to 24; that stretch reads MTGGKSGGKASGSKNAQSRSSKAG. Lys-5 and Lys-9 each carry N6-acetyllysine. Gln-106 carries the N5-methylglutamine modification. Ser-129 carries the phosphoserine modification. A [ST]-Q motif motif is present at residues 129 to 130; the sequence is SQ.

This sequence belongs to the histone H2A family. The nucleosome is a histone octamer containing two molecules each of H2A, H2B, H3 and H4 assembled in one H3-H4 heterotetramer and two H2A-H2B heterodimers. The octamer wraps approximately 147 bp of DNA. Post-translationally, phosphorylated to form H2AS128ph (gamma-H2A) in response to DNA double-strand breaks (DSBs) generated by exogenous genotoxic agents and by stalled replication forks. Phosphorylation is dependent on the DNA damage checkpoint kinases mec1/ATR and tel1/ATM, spreads on either side of a detected DSB site and may mark the surrounding chromatin for recruitment of proteins required for DNA damage signaling and repair. Gamma-H2A is removed from the DNA prior to the strand invasion-primer extension step of the repair process and subsequently dephosphorylated. Dephosphorylation is necessary for efficient recovery from the DNA damage checkpoint. In terms of processing, acetylated by esa1 to form H2AK4ac and H2AK7ac.

It is found in the nucleus. Its subcellular location is the chromosome. Its function is as follows. Core component of nucleosome which plays a central role in DNA double strand break (DSB) repair. Nucleosomes wrap and compact DNA into chromatin, limiting DNA accessibility to the cellular machineries which require DNA as a template. Histones thereby play a central role in transcription regulation, DNA repair, DNA replication and chromosomal stability. DNA accessibility is regulated via a complex set of post-translational modifications of histones, also called histone code, and nucleosome remodeling. The chain is Histone H2A (htaA) from Emericella nidulans (strain FGSC A4 / ATCC 38163 / CBS 112.46 / NRRL 194 / M139) (Aspergillus nidulans).